Here is a 410-residue protein sequence, read N- to C-terminus: D-amino acid dehydrogenase (410 aa).

9–14 is a binding site for FAD; the sequence is GGGIVG.

The protein belongs to the DadA oxidoreductase family. FAD is required as a cofactor.

The protein resides in the cell inner membrane. It catalyses the reaction a D-alpha-amino acid + a quinone + H2O = a 2-oxocarboxylate + a quinol + NH4(+). Catalyzes the oxidative deamination of D-amino acids. Has broad substrate specificity; is mostly active on D-proline, and to a lesser extent, on several other D-amino acids such as D-alanine, D-phenylalanine and D-serine. Mediates electron transport from D-proline to coenzyme Q1 in vitro, and is involved in the electron transport chain from D-proline to the c-type cytochrome in vivo. The sequence is that of D-amino acid dehydrogenase from Helicobacter pylori (strain ATCC 700392 / 26695) (Campylobacter pylori).